A 37-amino-acid polypeptide reads, in one-letter code: Fructose-bisphosphate aldolase A (37 aa).

This sequence belongs to the class I fructose-bisphosphate aldolase family. In terms of assembly, tetramer.

The catalysed reaction is beta-D-fructose 1,6-bisphosphate = D-glyceraldehyde 3-phosphate + dihydroxyacetone phosphate. Its pathway is carbohydrate degradation; glycolysis; D-glyceraldehyde 3-phosphate and glycerone phosphate from D-glucose: step 4/4. In terms of biological role, plays a key role in glycolysis and gluconeogenesis. This Thunnus albacares (Yellowfin tuna) protein is Fructose-bisphosphate aldolase A.